A 185-amino-acid chain; its full sequence is Serine/arginine-rich splicing factor RSZ21A (185 aa).

In terms of domain architecture, RRM spans 2 to 73 (ARVYVGNLDP…WRVELSRNAS (72 aa)). The CCHC-type zinc finger occupies 87-104 (SKCYECGETGHFARECRL). Residues 109 to 185 (GGLGSGRRRS…YDNGYRRSRS (77 aa)) form a disordered region. Residues 114–131 (GRRRSRSRSRSRSPRYRR) are compositionally biased toward basic residues. 2 stretches are compositionally biased toward low complexity: residues 132-145 (SPSY…PAGR) and 152-163 (VSPARARSYSRS).

Belongs to the splicing factor SR family. Extensively phosphorylated on serine residues in the RS domain. In terms of tissue distribution, expressed in roots, leaves and immature seeds.

It is found in the nucleus. Involved in pre-mRNA splicing. In Oryza sativa subsp. japonica (Rice), this protein is Serine/arginine-rich splicing factor RSZ21A (RSZ21A).